Here is a 502-residue protein sequence, read N- to C-terminus: UPF0371 protein CLM_0396 (502 aa).

It belongs to the UPF0371 family.

In Clostridium botulinum (strain Kyoto / Type A2), this protein is UPF0371 protein CLM_0396.